Consider the following 379-residue polypeptide: Armadillo repeat-containing X-linked protein 3 (379 aa).

Over 1–6 (MGYARK) the chain is Mitochondrial intermembrane. Mitochondrion outer membrane (MOM)-targeting sequence stretches follow at residues 1–6 (MGYARK) and 26–37 (RLTRGRKQNKEK). Residues 7-29 (VGWVTAGLVIGAGACYCIYRLTR) traverse the membrane as a helical; Signal-anchor segment. The Cytoplasmic portion of the chain corresponds to 30-379 (GRKQNKEKMA…TERMFPKSQE (350 aa)). Residues Ser-61, Ser-67, and Ser-72 each carry the phosphoserine modification. The segment at 89–98 (RARARARARA) is nuclear localization signal. Over residues 95-106 (RARATRARRAVQ) the composition is skewed to basic residues. The segment at 95–116 (RARATRARRAVQKRASPNSDDT) is disordered. Residue Ser-110 is modified to Phosphoserine. ARM repeat units follow at residues 111 to 151 (PNSD…NNAA), 153 to 192 (AFNR…NLSV), and 233 to 272 (VTNE…NLAE).

It belongs to the eutherian X-chromosome-specific Armcx family. Interacts (via ARM domain) with MIRO1, MIRO2 and TRAK2. The interaction with Miro is calcium-dependent. Interacts with Sox10. As to expression, highly expressed in the developing neural tissues, neural crest derivatives and hind limbs. Also widely expressed in the adult nervous tissue, especially in the forebrain, including the cerebral cortex, hippocampus and thalamus.

The protein localises to the mitochondrion outer membrane. The protein resides in the cytoplasm. It is found in the nucleus. In terms of biological role, regulates mitochondrial aggregation and transport in axons in living neurons. May link mitochondria to the Trak2-kinesin motor complex via its interaction with Miro and Trak2. Mitochondrial distribution and dynamics is regulated through Armcx3 protein degradation, which is promoted by PCK and negatively regulated by Wnt1. Enhances the Sox10-mediated transactivation of the neuronal acetylcholine receptor subunit alpha-3 and beta-4 subunit gene promoters. The polypeptide is Armadillo repeat-containing X-linked protein 3 (Armcx3) (Mus musculus (Mouse)).